Reading from the N-terminus, the 358-residue chain is Spermatogenesis-associated protein 22 (358 aa).

Composition is skewed to polar residues over residues Met-1–Ser-12, Gln-30–Gly-51, Pro-81–Arg-121, and Gln-150–Glu-159. Disordered regions lie at residues Met-1–Gly-51, Pro-81–Thr-122, and Gln-150–Pro-172.

Component of a multiprotein complex with MEIOB and RPA2. Interacts with MEIOB. Interacts with the complex BRME1:HSF2BP:BRCA2. As to expression, specifically expressed in gonadal germ cells, when male and female germ cells progress through prophase of meiosis I.

It is found in the chromosome. In terms of biological role, meiosis-specific protein required for homologous recombination in meiosis I. This chain is Spermatogenesis-associated protein 22, found in Mus musculus (Mouse).